We begin with the raw amino-acid sequence, 427 residues long: Piwi protein (427 aa).

The segment at 38-167 is mid domain; the sequence is PYEVPSLKYN…VQFVSKLGGK (130 aa). One can recognise a Piwi domain in the interval 110 to 406; it reads GIMLVLPEYN…VAGIIANVNR (297 aa). The tract at residues 118-124 is binds 5'-phosphorylated end of guide DNA; it reads YNTPLYY. A binds target DNA region spans residues 147–148; that stretch reads RN. The tract at residues 150–155 is binds guide DNA; the sequence is TFYVDN. Positions 159 and 427 each coordinate a divalent metal cation. Positions 168–427 are PIWI domain; that stretch reads PWILNVDPEK…RSLQTNPWFL (260 aa).

This sequence belongs to the argonaute family. Short pAgo subfamily. Homodimer probably stabilized by DNA. Each subunit is capable of interacting with a DNA molecule. A divalent metal cation is required as a cofactor.

Its function is as follows. Might play a role in defense against invading genetic elements, using short nucleic acid sequences as guides to bind complementary target strands, resulting in slicing of the target nucleic acid. Binds nucleic acids with decreasing affinity in the following order; ssDNA, ssRNA, dsDNA, RNA-DNA, RNA-RNA. Association of the 5' seed region of the guide strand (nucleotides 2-7) with AfPiwi increases affinity for the corresponding target strand; the greatest increase in affinity is for guide DNA with target RNA. This is Piwi protein from Archaeoglobus fulgidus (strain ATCC 49558 / DSM 4304 / JCM 9628 / NBRC 100126 / VC-16).